The sequence spans 146 residues: Kappa-casein (146 aa).

O-linked (GalNAc...) threonine glycans are attached at residues T107, T112, and T118. S143 carries the phosphoserine modification.

Belongs to the kappa-casein family. As to expression, mammary gland specific. Secreted in milk.

The protein resides in the secreted. In terms of biological role, kappa-casein stabilizes micelle formation, preventing casein precipitation in milk. This chain is Kappa-casein (CSN3), found in Dicotyles tajacu (Collared peccary).